The following is a 644-amino-acid chain: Exoribonuclease 2 (644 aa).

The 328-residue stretch at 189–516 (REDLTALDFV…NHRLLKAVIK (328 aa)) folds into the RNB domain. Residues 561–643 (DTRFAAEIVD…ETRSIIARPV (83 aa)) form the S1 motif domain.

Belongs to the RNR ribonuclease family. RNase II subfamily.

It is found in the cytoplasm. It catalyses the reaction Exonucleolytic cleavage in the 3'- to 5'-direction to yield nucleoside 5'-phosphates.. Its function is as follows. Involved in mRNA degradation. Hydrolyzes single-stranded polyribonucleotides processively in the 3' to 5' direction. This Escherichia coli O127:H6 (strain E2348/69 / EPEC) protein is Exoribonuclease 2.